The following is a 225-amino-acid chain: NAD(P)H-quinone oxidoreductase subunit K, chloroplastic (225 aa).

[4Fe-4S] cluster is bound by residues cysteine 43, cysteine 44, cysteine 108, and cysteine 139.

It belongs to the complex I 20 kDa subunit family. NDH is composed of at least 16 different subunits, 5 of which are encoded in the nucleus. Requires [4Fe-4S] cluster as cofactor.

Its subcellular location is the plastid. The protein resides in the chloroplast thylakoid membrane. The enzyme catalyses a plastoquinone + NADH + (n+1) H(+)(in) = a plastoquinol + NAD(+) + n H(+)(out). The catalysed reaction is a plastoquinone + NADPH + (n+1) H(+)(in) = a plastoquinol + NADP(+) + n H(+)(out). In terms of biological role, NDH shuttles electrons from NAD(P)H:plastoquinone, via FMN and iron-sulfur (Fe-S) centers, to quinones in the photosynthetic chain and possibly in a chloroplast respiratory chain. The immediate electron acceptor for the enzyme in this species is believed to be plastoquinone. Couples the redox reaction to proton translocation, and thus conserves the redox energy in a proton gradient. This chain is NAD(P)H-quinone oxidoreductase subunit K, chloroplastic, found in Populus alba (White poplar).